A 223-amino-acid polypeptide reads, in one-letter code: Phosphoribosylformylglycinamidine synthase subunit PurQ (223 aa).

Residues 2-223 enclose the Glutamine amidotransferase type-1 domain; that stretch reads KFAVLKFPGS…MVNSWREQNV (222 aa). Cys-85 serves as the catalytic Nucleophile. Catalysis depends on residues His-193 and Glu-195.

In terms of assembly, part of the FGAM synthase complex composed of 1 PurL, 1 PurQ and 2 PurS subunits.

It is found in the cytoplasm. It carries out the reaction N(2)-formyl-N(1)-(5-phospho-beta-D-ribosyl)glycinamide + L-glutamine + ATP + H2O = 2-formamido-N(1)-(5-O-phospho-beta-D-ribosyl)acetamidine + L-glutamate + ADP + phosphate + H(+). The catalysed reaction is L-glutamine + H2O = L-glutamate + NH4(+). The protein operates within purine metabolism; IMP biosynthesis via de novo pathway; 5-amino-1-(5-phospho-D-ribosyl)imidazole from N(2)-formyl-N(1)-(5-phospho-D-ribosyl)glycinamide: step 1/2. Part of the phosphoribosylformylglycinamidine synthase complex involved in the purines biosynthetic pathway. Catalyzes the ATP-dependent conversion of formylglycinamide ribonucleotide (FGAR) and glutamine to yield formylglycinamidine ribonucleotide (FGAM) and glutamate. The FGAM synthase complex is composed of three subunits. PurQ produces an ammonia molecule by converting glutamine to glutamate. PurL transfers the ammonia molecule to FGAR to form FGAM in an ATP-dependent manner. PurS interacts with PurQ and PurL and is thought to assist in the transfer of the ammonia molecule from PurQ to PurL. This chain is Phosphoribosylformylglycinamidine synthase subunit PurQ, found in Staphylococcus saprophyticus subsp. saprophyticus (strain ATCC 15305 / DSM 20229 / NCIMB 8711 / NCTC 7292 / S-41).